Reading from the N-terminus, the 731-residue chain is DNA gyrase subunit B, chloroplastic/mitochondrial (731 aa).

In terms of domain architecture, Toprim spans A512 to G619. Mg(2+)-binding residues include E518, D592, and D594.

It belongs to the type II topoisomerase GyrB family. Made up of two chains. The A chain is responsible for DNA breakage and rejoining; the B chain catalyzes ATP hydrolysis. Mg(2+) serves as cofactor. The cofactor is Mn(2+). Ca(2+) is required as a cofactor. As to expression, ubiquitous.

It is found in the plastid. The protein localises to the chloroplast. Its subcellular location is the mitochondrion. It catalyses the reaction ATP-dependent breakage, passage and rejoining of double-stranded DNA.. Seems to play a critical role in chloroplast nucleoid partitioning by regulating DNA topology. A type II topoisomerase that negatively supercoils closed circular double-stranded DNA in an ATP-dependent manner. This is DNA gyrase subunit B, chloroplastic/mitochondrial (GYRB) from Nicotiana benthamiana.